The chain runs to 250 residues: 2,3-bisphosphoglycerate-dependent phosphoglycerate mutase (250 aa).

Residues 10–17 (RHGESQWN), 23–24 (TG), Arg-62, 89–92 (ERHY), Lys-100, 116–117 (RR), and 185–186 (GN) each bind substrate. Catalysis depends on His-11, which acts as the Tele-phosphohistidine intermediate. Glu-89 acts as the Proton donor/acceptor in catalysis.

It belongs to the phosphoglycerate mutase family. BPG-dependent PGAM subfamily. In terms of assembly, homodimer.

The enzyme catalyses (2R)-2-phosphoglycerate = (2R)-3-phosphoglycerate. Its pathway is carbohydrate degradation; glycolysis; pyruvate from D-glyceraldehyde 3-phosphate: step 3/5. Functionally, catalyzes the interconversion of 2-phosphoglycerate and 3-phosphoglycerate. The polypeptide is 2,3-bisphosphoglycerate-dependent phosphoglycerate mutase (Yersinia enterocolitica serotype O:8 / biotype 1B (strain NCTC 13174 / 8081)).